The following is a 341-amino-acid chain: Methionine import ATP-binding protein MetN 2 (341 aa).

One can recognise an ABC transporter domain in the interval 2–241; that stretch reads IKLNQIVKRY…PQHEVTKRFV (240 aa). 38–45 contacts ATP; that stretch reads GFSGAGKS.

It belongs to the ABC transporter superfamily. Methionine importer (TC 3.A.1.24) family. In terms of assembly, the complex is composed of two ATP-binding proteins (MetN), two transmembrane proteins (MetI) and a solute-binding protein (MetQ).

It localises to the cell membrane. The catalysed reaction is L-methionine(out) + ATP + H2O = L-methionine(in) + ADP + phosphate + H(+). It carries out the reaction D-methionine(out) + ATP + H2O = D-methionine(in) + ADP + phosphate + H(+). In terms of biological role, part of the ABC transporter complex MetNIQ involved in methionine import. Responsible for energy coupling to the transport system. This Staphylococcus epidermidis (strain ATCC 35984 / DSM 28319 / BCRC 17069 / CCUG 31568 / BM 3577 / RP62A) protein is Methionine import ATP-binding protein MetN 2.